The following is a 155-amino-acid chain: Small ribosomal subunit protein uS7 (155 aa).

The protein belongs to the universal ribosomal protein uS7 family. Part of the 30S ribosomal subunit. Contacts proteins S9 and S11.

Its function is as follows. One of the primary rRNA binding proteins, it binds directly to 16S rRNA where it nucleates assembly of the head domain of the 30S subunit. Is located at the subunit interface close to the decoding center, probably blocks exit of the E-site tRNA. The sequence is that of Small ribosomal subunit protein uS7 from Ureaplasma parvum serovar 3 (strain ATCC 27815 / 27 / NCTC 11736).